Here is a 248-residue protein sequence, read N- to C-terminus: ATP synthase subunit a, chloroplastic (248 aa).

Helical transmembrane passes span 34 to 54, 95 to 115, 134 to 154, and 203 to 223; these read LHGQVFIVSWLVMLALIIFAL, VPYISTVFLFIFGANWAGALI, INVTVALALLTSISYFYAGIS, and VFALLVPILIPLPVMTLGLFA.

Belongs to the ATPase A chain family. In terms of assembly, F-type ATPases have 2 components, CF(1) - the catalytic core - and CF(0) - the membrane proton channel. CF(1) has five subunits: alpha(3), beta(3), gamma(1), delta(1), epsilon(1). CF(0) has four main subunits: a, b, b' and c.

Its subcellular location is the plastid. The protein localises to the chloroplast thylakoid membrane. Its function is as follows. Key component of the proton channel; it plays a direct role in the translocation of protons across the membrane. The protein is ATP synthase subunit a, chloroplastic of Guillardia theta (Cryptophyte).